Consider the following 74-residue polypeptide: Small heat shock protein hspG10 (74 aa).

Residues lysine 31–isoleucine 74 enclose the sHSP domain.

Belongs to the small heat shock protein (HSP20) family.

The polypeptide is Small heat shock protein hspG10 (hspG10) (Dictyostelium discoideum (Social amoeba)).